A 198-amino-acid chain; its full sequence is Recombination protein RecR (198 aa).

The segment at 56-71 (CHVCGNVDTGDPCGIC) adopts a C4-type zinc-finger fold. Residues 79 to 174 (RMLCVVEEVA…RLTQLAHGLP (96 aa)) form the Toprim domain.

This sequence belongs to the RecR family.

May play a role in DNA repair. It seems to be involved in an RecBC-independent recombinational process of DNA repair. It may act with RecF and RecO. This is Recombination protein RecR from Rhizorhabdus wittichii (strain DSM 6014 / CCUG 31198 / JCM 15750 / NBRC 105917 / EY 4224 / RW1) (Sphingomonas wittichii).